A 532-amino-acid chain; its full sequence is Light-independent protochlorophyllide reductase subunit B (532 aa).

Asp-36 lines the [4Fe-4S] cluster pocket. Residue Asp-292 is the Proton donor of the active site. 428-429 (GL) serves as a coordination point for substrate. Residues 445–486 (EEEEPESISNGHAAAAGSEGGVPDSGEAGDAGDTDGMPWSPD) form a disordered region.

It belongs to the ChlB/BchB/BchZ family. In terms of assembly, protochlorophyllide reductase is composed of three subunits; BchL, BchN and BchB. Forms a heterotetramer of two BchB and two BchN subunits. [4Fe-4S] cluster serves as cofactor.

The enzyme catalyses chlorophyllide a + oxidized 2[4Fe-4S]-[ferredoxin] + 2 ADP + 2 phosphate = protochlorophyllide a + reduced 2[4Fe-4S]-[ferredoxin] + 2 ATP + 2 H2O. Its pathway is porphyrin-containing compound metabolism; bacteriochlorophyll biosynthesis (light-independent). Functionally, component of the dark-operative protochlorophyllide reductase (DPOR) that uses Mg-ATP and reduced ferredoxin to reduce ring D of protochlorophyllide (Pchlide) to form chlorophyllide a (Chlide). This reaction is light-independent. The NB-protein (BchN-BchB) is the catalytic component of the complex. In Chlorobium phaeobacteroides (strain BS1), this protein is Light-independent protochlorophyllide reductase subunit B.